A 100-amino-acid chain; its full sequence is Mini zinc finger protein 2 (100 aa).

The segment at 1–26 is disordered; that stretch reads MRKRQVVLRRASPEEPSRSSSTASSL. The ZF-HD dimerization-type; degenerate zinc-finger motif lies at 33-83; it reads YGECQKNHAAAVGGYAVDGCREFMASRGEEGTVAALTCAACGCHRSFHRRE.

As to quaternary structure, homo- and heterodimers. Interacts with ZHD1, ZHD3, ZHD5, ZHD8, ZHD10 and ZHD13. Mostly expressed in stems, flowers and siliques, and, to a lower extent, in inflorescence.

It localises to the cytoplasm. Functionally, inhibits zinc finger homeodomain (ZHD) transcription factors by interacting with them to prevent both their nuclear localization and their DNA-binding properties. Involved in integrating signals from multiple hormones by regulating the expression of specific genes. This chain is Mini zinc finger protein 2 (MIF2), found in Arabidopsis thaliana (Mouse-ear cress).